The chain runs to 185 residues: HTH-type transcriptional regulator Hpr (185 aa).

Positions A13 to G157 constitute an HTH marR-type domain. Positions I63 to E86 form a DNA-binding region, H-T-H motif.

In terms of assembly, homodimer.

Its function is as follows. Negative regulator of protease production and sporulation. The protein is HTH-type transcriptional regulator Hpr of Bacillus cytotoxicus (strain DSM 22905 / CIP 110041 / 391-98 / NVH 391-98).